A 413-amino-acid chain; its full sequence is Phosphatidylcholine:ceramide cholinephosphotransferase 1 (413 aa).

An SAM domain is found at 7 to 70 (WSPKKVADWL…LDMIETLKME (64 aa)). A Phosphoserine modification is found at Ser-8. Transmembrane regions (helical) follow at residues 136 to 156 (FLAF…ISVV), 184 to 204 (FSIC…QWLL), 215 to 235 (FFCI…VTTL), 276 to 296 (MCGD…YLFI), and 304 to 324 (LWWY…CILL). Residue His-285 is part of the active site. Residues 325–413 (AHDHYTVDVV…VKYSRLVNDT (89 aa)) are Cytoplasmic-facing. Residues His-328 and Asp-332 contribute to the active site.

This sequence belongs to the sphingomyelin synthase family. Brain, heart, kidney, liver, muscle and stomach.

It is found in the golgi apparatus membrane. It catalyses the reaction an N-acylsphing-4-enine + a 1,2-diacyl-sn-glycero-3-phosphocholine = a sphingomyelin + a 1,2-diacyl-sn-glycerol. The enzyme catalyses an N-acylsphinganine + a 1,2-diacyl-sn-glycero-3-phosphocholine = an N-acylsphinganine-1-phosphocholine + a 1,2-diacyl-sn-glycerol. The catalysed reaction is an N-acyl-(4R)-4-hydroxysphinganine + a 1,2-diacyl-sn-glycero-3-phosphocholine = an N-acyl-(4R)-4-hydroxysphinganine-phosphocholine + a 1,2-diacyl-sn-glycerol. It carries out the reaction 1-(9Z-octadecenoyl)-2-acyl-sn-3-glycerol + a sphingomyelin = a 1-(9Z-octadecenoyl)-2-acyl-sn-glycero-3-phosphocholine + an N-acylsphing-4-enine. It catalyses the reaction N-hexadecanoylsphinganine + a 1,2-diacyl-sn-glycero-3-phosphocholine = N-hexadecanoyl-sphinganine-1-phosphocholine + a 1,2-diacyl-sn-glycerol. The enzyme catalyses N-hexadecanoyl-(4R)-hydroxysphinganine + a 1,2-diacyl-sn-glycero-3-phosphocholine = N-hexadecanoyl-(4R)-hydroxysphinganine-phosphocholine + a 1,2-diacyl-sn-glycerol. The catalysed reaction is an N-acylsphing-4-enine + a 1,2-diacyl-sn-glycero-3-phosphoethanolamine = an N-acylsphing-4-enine 1-phosphoethanolamine + a 1,2-diacyl-sn-glycerol. Its pathway is sphingolipid metabolism. Its activity is regulated as follows. Inhibited by bacterial PC-phospholipase C inhibitor D609. Its function is as follows. Major sphingomyelin synthase at the Golgi apparatus. Catalyzes the reversible transfer of phosphocholine moiety in sphingomyelin biosynthesis: in the forward reaction transfers phosphocholine head group of phosphatidylcholine (PC) on to ceramide (CER) to form ceramide phosphocholine (sphingomyelin, SM) and diacylglycerol (DAG) as by-product, and in the reverse reaction transfers phosphocholine from SM to DAG to form PC and CER. The direction of the reaction depends on the levels of CER and DAG in Golgi membranes. Converts the newly synthesized CER, that is transported from the endoplasmic reticulum to the trans-Golgi by the Cer transport protein (CERT), to SM. Can form a heteromeric complex with glucosylceramide synthase (GCS) increasing SMS activity and reducing glucosylceramide synthesis, a critical mechanism that controls the metabolic fate of CER in the Golgi. Does not use free phosphorylcholine or CDP-choline as donor. Can also transfer phosphoethanolamine head group of phosphatidylethanolamine (PE) on to CER to form ceramide phosphoethanolamine (CPE). Regulates receptor-mediated signal transduction via mitogenic DAG and proapoptotic CER, as well as via SM, a structural component of membrane rafts that serve as platforms for signal transduction and protein sorting. Plays a role in secretory transport via regulation of DAG pool at the Golgi apparatus and its downstream effects on PRKD1. In Homo sapiens (Human), this protein is Phosphatidylcholine:ceramide cholinephosphotransferase 1 (SGMS1).